Consider the following 423-residue polypeptide: MSSKFMKSAAVLGTATLASLLLVACGSKTADKPADSGSSEVKELTVYVDEGYKSYIEEVAKAYEKEAGVKVTLKTGDALGGLDKLSLDNQSGNVPDVMMAPYDRVGSLGSDGQLSEVKLSDGAKTDDTTKSLVTAANGKVYGAPAVIESLVMYYNKDLVKDAPKTFADLENLAKDSKYAFAGEDGKTTAFLADWTNFYYTYGLLAGNGAYVFGQNGKDAKDIGLANDGSIVGINYAKSWYEKWPKGMQDTEGAGNLIQTQFQEGKTAAIIDGPWKAQAFKDAKVNYGVATIPTLPNGKEYAAFGGGKAWVIPQAVKNLEASQKFVDFLVATEQQKVLYDKTNEIPANTEARSYAEGKNDELTTAVIKQFKNTQPLPNISQMSAVWDPAKNMLFDAVSGQKDAKTAANDAVTLIKETIKQKFGE.

Positions 1–24 (MSSKFMKSAAVLGTATLASLLLVA) are cleaved as a signal peptide. Cys-25 carries N-palmitoyl cysteine lipidation. Cys-25 carries S-diacylglycerol cysteine lipidation. Substrate contacts are provided by residues Tyr-52, Asp-77, Asp-83, 103–104 (DR), Glu-148, Asp-193, Asn-196, 251–254 (EGAG), Trp-274, and Lys-307.

Belongs to the bacterial solute-binding protein 1 family.

It is found in the cell membrane. Functionally, part of an ABC transporter complex involved in the uptake of maltodextrins. Binds glycogen-derived linear maltooligosaccharides increasing in size from maltotriose to maltooctaose with the highest affinity for maltotriose. Has a very weak affinity for maltose. Has also a very low affinity for maltotetraitol, indicating that the binding is selective for maltooligosaccharides with an intact reducing end. The polypeptide is Maltooligosaccharide ABC transporter solute-binding lipoprotein (Streptococcus pneumoniae serotype 4 (strain ATCC BAA-334 / TIGR4)).